The chain runs to 689 residues: uncharacterized protein (689 aa).

The protein localises to the mitochondrion. This is an uncharacterized protein from Schizosaccharomyces pombe (strain 972 / ATCC 24843) (Fission yeast).